Consider the following 506-residue polypeptide: 2,3-bisphosphoglycerate-independent phosphoglycerate mutase (506 aa).

Residues aspartate 13 and serine 63 each contribute to the Mn(2+) site. The active-site Phosphoserine intermediate is the serine 63. Residues histidine 124, 153 to 154 (RD), arginine 183, arginine 189, 255 to 258 (RADR), and lysine 331 contribute to the substrate site. Mn(2+) contacts are provided by aspartate 397, histidine 401, aspartate 438, histidine 439, and histidine 457.

This sequence belongs to the BPG-independent phosphoglycerate mutase family. In terms of assembly, monomer. The cofactor is Mn(2+).

It carries out the reaction (2R)-2-phosphoglycerate = (2R)-3-phosphoglycerate. Its pathway is carbohydrate degradation; glycolysis; pyruvate from D-glyceraldehyde 3-phosphate: step 3/5. Catalyzes the interconversion of 2-phosphoglycerate and 3-phosphoglycerate. This is 2,3-bisphosphoglycerate-independent phosphoglycerate mutase from Ruegeria sp. (strain TM1040) (Silicibacter sp.).